The chain runs to 554 residues: Exodeoxyribonuclease 7 large subunit (554 aa).

This sequence belongs to the XseA family. As to quaternary structure, heterooligomer composed of large and small subunits.

The protein localises to the cytoplasm. It carries out the reaction Exonucleolytic cleavage in either 5'- to 3'- or 3'- to 5'-direction to yield nucleoside 5'-phosphates.. Its function is as follows. Bidirectionally degrades single-stranded DNA into large acid-insoluble oligonucleotides, which are then degraded further into small acid-soluble oligonucleotides. The polypeptide is Exodeoxyribonuclease 7 large subunit (Chlamydia pneumoniae (Chlamydophila pneumoniae)).